The following is an 877-amino-acid chain: AP-5 complex subunit beta-1 (877 aa).

As to quaternary structure, probably part of the adaptor protein complex 5 (AP-5), a tetramer composed of AP5B1, AP5M1, AP5S1 and AP5Z1. Interacts with ZFYVE26 and SPG11.

Functionally, as part of AP-5, a probable fifth adaptor protein complex, it may be involved in endosomal transport. In Bos taurus (Bovine), this protein is AP-5 complex subunit beta-1 (AP5B1).